The sequence spans 122 residues: Nodulation protein NolR (122 aa).

The 95-residue stretch at 15–109 (EKHEDAEIAA…ALSDIYGDDT (95 aa)) folds into the HTH arsR-type domain. Positions 49–68 (VGALAHKVGLSQSALSQHLS) form a DNA-binding region, H-T-H motif.

In terms of assembly, binds to the operator site in homodimeric form.

Functionally, negative transacting factor controlling the nod regulon. May control the expression of nodD1, nodD2, nodD3 and nodABC genes. In Rhizobium meliloti (Ensifer meliloti), this protein is Nodulation protein NolR (nolR).